Here is a 218-residue protein sequence, read N- to C-terminus: MSQREAGQVDLEAWQPRTRVGRLVKEGKIKSIDEIFRRNLPILETEIVDYLLPGLDHEVIDVSIVQKMTDAGRITRFRAVVVVGNKDGYVGLGKGKARQFRFAIEKAIRNAKLNIIPVRRGCGSWECTCGEAHSVPFTVRGKSGSVEVILKPAPKGTGLVAGDVAKVVLRLAGISDVWTFTKGETRTSYNFARATYLALRNTYRFVTPADWAEARLRL.

One can recognise an S5 DRBM domain in the interval 55–118; sequence LDHEVIDVSI…RNAKLNIIPV (64 aa).

It belongs to the universal ribosomal protein uS5 family. As to quaternary structure, part of the 30S ribosomal subunit. Contacts protein S4.

Functionally, with S4 and S12 plays an important role in translational accuracy. In Aeropyrum pernix (strain ATCC 700893 / DSM 11879 / JCM 9820 / NBRC 100138 / K1), this protein is Small ribosomal subunit protein uS5.